The sequence spans 265 residues: 2-C-methyl-D-erythritol 4-phosphate cytidylyltransferase (265 aa).

The span at 231-241 (DRGGASREAER) shows a compositional bias: basic and acidic residues. Residues 231–265 (DRGGASREAERSAMPSAATSVFSGARSAASGSEEV) are disordered. Low complexity predominate over residues 253 to 265 (SGARSAASGSEEV).

This sequence belongs to the IspD/TarI cytidylyltransferase family. IspD subfamily.

The enzyme catalyses 2-C-methyl-D-erythritol 4-phosphate + CTP + H(+) = 4-CDP-2-C-methyl-D-erythritol + diphosphate. It functions in the pathway isoprenoid biosynthesis; isopentenyl diphosphate biosynthesis via DXP pathway; isopentenyl diphosphate from 1-deoxy-D-xylulose 5-phosphate: step 2/6. Functionally, catalyzes the formation of 4-diphosphocytidyl-2-C-methyl-D-erythritol from CTP and 2-C-methyl-D-erythritol 4-phosphate (MEP). The chain is 2-C-methyl-D-erythritol 4-phosphate cytidylyltransferase from Xanthomonas campestris pv. campestris (strain 8004).